Here is a 226-residue protein sequence, read N- to C-terminus: Phosphoenolpyruvate guanylyltransferase (226 aa).

Positions 145, 161, and 164 each coordinate phosphoenolpyruvate.

It belongs to the CofC family.

It carries out the reaction phosphoenolpyruvate + GTP + H(+) = enolpyruvoyl-2-diphospho-5'-guanosine + diphosphate. It participates in cofactor biosynthesis; coenzyme F420 biosynthesis. Guanylyltransferase that catalyzes the activation of phosphoenolpyruvate (PEP) as enolpyruvoyl-2-diphospho-5'-guanosine, via the condensation of PEP with GTP. It is involved in the biosynthesis of coenzyme F420, a hydride carrier cofactor. The protein is Phosphoenolpyruvate guanylyltransferase of Nocardia farcinica (strain IFM 10152).